The sequence spans 286 residues: Flagellar filament 31.3 kDa core protein (286 aa).

The protein belongs to the bacterial flagellin family. The core of the flagellum consists of several antigenically related polypeptides. Post-translationally, glycosylated. Glycosylation is not essential for motility.

The protein localises to the periplasmic flagellum. It is found in the periplasm. Its function is as follows. Component of the core of the flagella. The chain is Flagellar filament 31.3 kDa core protein (flaB2) from Treponema maltophilum.